The primary structure comprises 185 residues: Ribosome-recycling factor (185 aa).

The segment at 144-164 (KEGEAGEDEVGRAEKDLDKTT) is disordered.

It belongs to the RRF family.

Its subcellular location is the cytoplasm. Responsible for the release of ribosomes from messenger RNA at the termination of protein biosynthesis. May increase the efficiency of translation by recycling ribosomes from one round of translation to another. The polypeptide is Ribosome-recycling factor (Mycobacterium tuberculosis (strain CDC 1551 / Oshkosh)).